A 288-amino-acid polypeptide reads, in one-letter code: Putative transcription factor kapC (288 aa).

Over residues 1 to 10 the composition is skewed to pro residues; it reads MQPTLAPAPH. The tract at residues 1–121 is disordered; the sequence is MQPTLAPAPH…AAQRAFRQRK (121 aa). Residues 26-41 show a composition bias toward low complexity; the sequence is HDQLLAAHQHLSHPQQ. Pro residues predominate over residues 42-54; sequence ARPPPPPPQPPHM. Residues 84 to 93 are compositionally biased toward polar residues; the sequence is QPDLSGQESP. Residues 100–163 enclose the bZIP domain; that stretch reads PLSTSKRAAQ…EYIINLQSRL (64 aa). Residues 101 to 124 form a basic motif region; the sequence is LSTSKRAAQNRAAQRAFRQRKEAH. The segment covering 106-116 has biased composition (low complexity); it reads RAAQNRAAQRA. A leucine-zipper region spans residues 128-159; it reads LEGKVKAYETMGEAIKALQAENYQLREYIINL. Disordered regions lie at residues 172–226 and 242–288; these read ELPG…NDDM and PPTE…PLIS. Over residues 202–212 the composition is skewed to pro residues; the sequence is PVPPPTAPQQP. Positions 213 to 222 are enriched in low complexity; sequence QPAQNQASAP.

This sequence belongs to the bZIP family.

The protein resides in the nucleus. Functionally, putative transcription factor. The chain is Putative transcription factor kapC (kapC) from Aspergillus clavatus (strain ATCC 1007 / CBS 513.65 / DSM 816 / NCTC 3887 / NRRL 1 / QM 1276 / 107).